Here is a 154-residue protein sequence, read N- to C-terminus: Prefoldin subunit alpha (154 aa).

Residues Asp92–Gln102 are compositionally biased toward polar residues. The segment at Asp92–Glu154 is disordered. Over residues Asp103–Asp114 the composition is skewed to basic and acidic residues. Residues Gln128–Gln148 are compositionally biased toward low complexity.

Belongs to the prefoldin subunit alpha family. Heterohexamer of two alpha and four beta subunits.

The protein localises to the cytoplasm. Functionally, molecular chaperone capable of stabilizing a range of proteins. Seems to fulfill an ATP-independent, HSP70-like function in archaeal de novo protein folding. The polypeptide is Prefoldin subunit alpha (Haloquadratum walsbyi (strain DSM 16790 / HBSQ001)).